Here is a 1003-residue protein sequence, read N- to C-terminus: cGMP-dependent protein kinase (1003 aa).

The disordered stretch occupies residues M1–Q141. A lipid anchor (N-myristoyl glycine) is attached at G2. A lipid anchor (S-palmitoyl cysteine) is attached at C4. The span at E69–Q85 shows a compositional bias: low complexity. Basic and acidic residues-rich tracts occupy residues Q86–P109 and E127–Q141. CNMP-binding domain regions lie at residues V173–S289, F292–G391, V411–G548, and I570–V669. The 3',5'-cyclic GMP site is built by G237, E238, R247, and T248. Positions 625, 634, 635, 637, 644, and 645 each coordinate 3',5'-cyclic GMP. The Protein kinase domain occupies L693–F950. Residues V699 to V707 and K722 contribute to the ATP site. The active-site Proton acceptor is D816. The AGC-kinase C-terminal domain maps to S951–F1003.

This sequence belongs to the protein kinase superfamily. AGC Ser/Thr protein kinase family. cGMP subfamily. Monomer. Mg(2+) is required as a cofactor.

It is found in the cell membrane. The protein localises to the cytoplasm. It carries out the reaction L-seryl-[protein] + ATP = O-phospho-L-seryl-[protein] + ADP + H(+). The enzyme catalyses L-threonyl-[protein] + ATP = O-phospho-L-threonyl-[protein] + ADP + H(+). Activated by cGMP. The cGMP-binding domains acts cooperatively to activate PKG. Inhibited by the antiparasitic small molecule 4-[2-(4-fluorophenyl)-5-(1-methylpiperidine-4-yl)-1Hpyrrol- 3-yl]pyridine (compound 1). Serine/threonine protein kinase which acts as a downstream effector of the second messenger cGMP. The protein is cGMP-dependent protein kinase of Eimeria tenella (Coccidian parasite).